The primary structure comprises 94 residues: MKYPKQIRTYCPFCKKHTIHKVERVKKRPRSELSAGQRRFRRILKGYGGFPRPKPEGREKPVKKLDLRFRCTECGKAHTRGRGFRVKKFELVEG.

Residues Cys11, Cys14, Cys71, and Cys74 each contribute to the Zn(2+) site. Residues 11–74 (CPFCKKHTIH…LDLRFRCTEC (64 aa)) form a C4-type zinc finger.

It belongs to the eukaryotic ribosomal protein eL42 family. Part of the 50S ribosomal subunit. Zn(2+) serves as cofactor.

Functionally, binds to the 23S rRNA. The protein is Large ribosomal subunit protein eL42 of Pyrococcus furiosus (strain ATCC 43587 / DSM 3638 / JCM 8422 / Vc1).